The sequence spans 640 residues: Insulin-like growth factor 1 receptor (640 aa).

Fibronectin type-III domains lie at 5-101 (VPRP…TMPA) and 107-200 (IPGP…VQAK). At 14 to 208 (EVMQIANTTM…AKTTYENFIH (195 aa)) the chain is on the extracellular side. N-linked (GlcNAc...) asparagine glycans are attached at residues Asn20, Asn29, Asn37, Asn173, and Asn186. Residues 209 to 232 (LMIALPIAVLLIVGGLVIMLYVFH) form a helical membrane-spanning segment. The Cytoplasmic segment spans residues 233–640 (RKRNSSRLGN…ALPLPQSSTC (408 aa)). The short motif at 250 to 253 (NPEY) is the IRS1- and SHC1-binding element. Residue Tyr253 is modified to Phosphotyrosine. The Protein kinase domain occupies 272–547 (ITMSRELGQG…SVKDEMEAGF (276 aa)). Residues 278–286 (LGQGSFGMV) and Lys306 each bind ATP. Asp408 (proton acceptor) is an active-site residue. A phosphotyrosine; by autocatalysis mark is found at Tyr434, Tyr438, and Tyr439. Residues Lys441 and Lys444 each participate in a glycyl lysine isopeptide (Lys-Gly) (interchain with G-Cter in ubiquitin) cross-link. Phosphoserine; by GSK3-beta is present on Ser551. Phosphoserine is present on Ser555. Residues 555–640 (SEENKPPEPE…ALPLPQSSTC (86 aa)) are disordered. Over residues 563 to 572 (PEELDLEPEN) the composition is skewed to acidic residues. The span at 573–589 (MESVPLDPSASSASLPL) shows a compositional bias: low complexity. The segment covering 590 to 599 (PDRHSGHKAE) has biased composition (basic and acidic residues).

Belongs to the protein kinase superfamily. Tyr protein kinase family. Insulin receptor subfamily. As to quaternary structure, tetramer of 2 alpha and 2 beta chains linked by disulfide bonds. The alpha chains contribute to the formation of the ligand-binding domain, while the beta chain carries the kinase domain. Interacts with PIK3R1 and with the PTB/PID domains of IRS1 and SHC1 in vitro when autophosphorylated on tyrosine residues. Forms a hybrid receptor with INSR, the hybrid is a tetramer consisting of 1 alpha chain and 1 beta chain of INSR and 1 alpha chain and 1 beta chain of IGF1R. Interacts with ARRB1 and ARRB2. Interacts with GRB10. Interacts with RACK1. Interacts with SOCS1, SOCS2 and SOCS3. Interacts with 14-3-3 proteins. Interacts with NMD2. Interacts with MAP3K5. Interacts with STAT3. Interacts (nascent precursor form) with ZFAND2B. Autophosphorylated on tyrosine residues in response to ligand binding. Autophosphorylation occurs in trans, i.e. one subunit of the dimeric receptor phosphorylates tyrosine residues on the other subunit. Autophosphorylation occurs in a sequential manner; Tyr-438 is predominantly phosphorylated first, followed by phosphorylation of Tyr-434 and Tyr-439. While every single phosphorylation increases kinase activity, all three tyrosine residues in the kinase activation loop (Tyr-438, Tyr-434 and Tyr-439) have to be phosphorylated for optimal activity. Can be autophosphorylated at additional tyrosine residues (in vitro). Autophosphorylated is followed by phosphorylation of juxtamembrane tyrosines and C-terminal serines. May also be phosphorylated at Tyr-434 and Tyr-439 by mTORC2. Phosphorylation of Tyr-253 is required for IRS1- and SHC1-binding. Phosphorylation of Ser-551 by GSK-3beta restrains kinase activity and promotes cell surface expression, it requires a priming phosphorylation at Ser-555. Dephosphorylated by PTPN1. In terms of processing, polyubiquitinated at Lys-441 and Lys-444 through both 'Lys-48' and 'Lys-29' linkages, promoting receptor endocytosis and subsequent degradation by the proteasome. Ubiquitination is facilitated by pre-existing phosphorylation. Post-translationally, sumoylated with SUMO1. Controlled by regulated intramembrane proteolysis (RIP). Undergoes metalloprotease-dependent constitutive ectodomain shedding to produce a membrane-anchored 52 kDa C-Terminal fragment which is further processed by presenilin gamma-secretase to yield an intracellular 50 kDa fragment.

The protein localises to the cell membrane. It catalyses the reaction L-tyrosyl-[protein] + ATP = O-phospho-L-tyrosyl-[protein] + ADP + H(+). Activated by autophosphorylation at Tyr-434, Tyr-438 and Tyr-439 on the kinase activation loop; phosphorylation at all three tyrosine residues is required for optimal kinase activity. Inhibited by MSC1609119A-1, BMS-754807, PQIP, benzimidazole pyridinone, isoquinolinedione, bis-azaindole, 3-cyanoquinoline, 2,4-bis-arylamino-1,3-pyrimidine, pyrrolopyrimidine, pyrrole-5-carboxaldehyde, picropodophyllin (PPP), tyrphostin derivatives. While most inhibitors bind to the ATP binding pocket, MSC1609119A-1 functions as allosteric inhibitor and binds close to the DFG motif and the activation loop. In terms of biological role, receptor tyrosine kinase which mediates actions of insulin-like growth factor 1 (IGF1). Binds IGF1 with high affinity and IGF2 and insulin (INS) with a lower affinity. The activated IGF1R is involved in cell growth and survival control. IGF1R is crucial for tumor transformation and survival of malignant cell. Ligand binding activates the receptor kinase, leading to receptor autophosphorylation, and tyrosines phosphorylation of multiple substrates, that function as signaling adapter proteins including, the insulin-receptor substrates (IRS1/2), Shc and 14-3-3 proteins. Phosphorylation of IRSs proteins lead to the activation of two main signaling pathways: the PI3K-AKT/PKB pathway and the Ras-MAPK pathway. The result of activating the MAPK pathway is increased cellular proliferation, whereas activating the PI3K pathway inhibits apoptosis and stimulates protein synthesis. Phosphorylated IRS1 can activate the 85 kDa regulatory subunit of PI3K (PIK3R1), leading to activation of several downstream substrates, including protein AKT/PKB. AKT phosphorylation, in turn, enhances protein synthesis through mTOR activation and triggers the antiapoptotic effects of IGFIR through phosphorylation and inactivation of BAD. In parallel to PI3K-driven signaling, recruitment of Grb2/SOS by phosphorylated IRS1 or Shc leads to recruitment of Ras and activation of the ras-MAPK pathway. In addition to these two main signaling pathways IGF1R signals also through the Janus kinase/signal transducer and activator of transcription pathway (JAK/STAT). Phosphorylation of JAK proteins can lead to phosphorylation/activation of signal transducers and activators of transcription (STAT) proteins. In particular activation of STAT3, may be essential for the transforming activity of IGF1R. The JAK/STAT pathway activates gene transcription and may be responsible for the transforming activity. JNK kinases can also be activated by the IGF1R. IGF1 exerts inhibiting activities on JNK activation via phosphorylation and inhibition of MAP3K5/ASK1, which is able to directly associate with the IGF1R. When present in a hybrid receptor with INSR, binds IGF1. This Bos taurus (Bovine) protein is Insulin-like growth factor 1 receptor (IGF1R).